The chain runs to 105 residues: Cell division protein FtsL (105 aa).

Residues 1–22 are Cytoplasmic-facing; sequence MIGNERHGLVGVIGADLIRNAK. The helical transmembrane segment at 23–43 threads the bilayer; the sequence is IPLILLVAVLISAVLVVTTAH. Residues 44 to 105 lie on the Periplasmic side of the membrane; that stretch reads RTRLLTAERE…DPSQENIVIK (62 aa).

This sequence belongs to the FtsL family. Part of a complex composed of FtsB, FtsL and FtsQ.

It is found in the cell inner membrane. Essential cell division protein. May link together the upstream cell division proteins, which are predominantly cytoplasmic, with the downstream cell division proteins, which are predominantly periplasmic. This Yersinia pestis protein is Cell division protein FtsL.